The following is a 382-amino-acid chain: Sphingoid long-chain base transporter RSB1 (382 aa).

Topologically, residues M1 to R34 are extracellular. 2 N-linked (GlcNAc...) asparagine glycosylation sites follow: N3 and N6. A helical transmembrane segment spans residues F35–L55. The Cytoplasmic portion of the chain corresponds to M56 to R57. Residues Q58–G78 traverse the membrane as a helical segment. The Extracellular portion of the chain corresponds to R79–D90. A helical transmembrane segment spans residues A91–Y111. The Cytoplasmic segment spans residues Y112–S135. Residues F136–C156 form a helical membrane-spanning segment. Topologically, residues G157–H171 are extracellular. The chain crosses the membrane as a helical span at residues V172–F192. Residues H193 to R241 lie on the Cytoplasmic side of the membrane. The chain crosses the membrane as a helical span at residues W242–C262. The Extracellular portion of the chain corresponds to C263–E281. Residues W282 to F302 traverse the membrane as a helical segment. The Cytoplasmic segment spans residues H303–L382.

Belongs to the lipid-translocating exporter (LTE) (TC 9.A.26.1) family.

Its subcellular location is the cell membrane. Catalyzes the ATP-dependent translocation of sphingoid long-chain bases (LCBs) from the cytoplasmic site toward the extracytoplasmic side of the membrane (flip-flop). Involved in the establishment of the functional lipid asymmetry of the plasma membrane. Regulates intracellular levels of LCBs, sphingolipid precursors that are growth inhibitory at increased levels. This is Sphingoid long-chain base transporter RSB1 (RSB1) from Saccharomyces cerevisiae (strain RM11-1a) (Baker's yeast).